The chain runs to 425 residues: Dihydroorotase (425 aa).

Zn(2+) is bound by residues H61 and H63. Residues 63-65 (HLR) and N95 each bind substrate. Residues D153, H180, and H233 each contribute to the Zn(2+) site. A substrate-binding site is contributed by N279. D306 provides a ligand contact to Zn(2+). The active site involves D306. H310 contacts substrate.

This sequence belongs to the metallo-dependent hydrolases superfamily. DHOase family. Class I DHOase subfamily. The cofactor is Zn(2+).

The enzyme catalyses (S)-dihydroorotate + H2O = N-carbamoyl-L-aspartate + H(+). The protein operates within pyrimidine metabolism; UMP biosynthesis via de novo pathway; (S)-dihydroorotate from bicarbonate: step 3/3. Functionally, catalyzes the reversible cyclization of carbamoyl aspartate to dihydroorotate. This chain is Dihydroorotase, found in Trichlorobacter lovleyi (strain ATCC BAA-1151 / DSM 17278 / SZ) (Geobacter lovleyi).